The chain runs to 56 residues: MAVQKSKKSRARRGMRRSHDAISGPSLTVDQTSGETHRRHHVTADGYYKGVQVISK.

Basic residues predominate over residues 1-16 (MAVQKSKKSRARRGMR). Residues 1 to 56 (MAVQKSKKSRARRGMRRSHDAISGPSLTVDQTSGETHRRHHVTADGYYKGVQVISK) form a disordered region. Residues 25–34 (PSLTVDQTSG) are compositionally biased toward polar residues.

This sequence belongs to the bacterial ribosomal protein bL32 family.

In Pseudoalteromonas translucida (strain TAC 125), this protein is Large ribosomal subunit protein bL32.